Consider the following 579-residue polypeptide: PCNA-interacting partner (579 aa).

The segment at 480-543 (TSFGNVHLDR…AKIPKKSNDS (64 aa)) is disordered. Over residues 486–496 (HLDRSKNEKVS) the composition is skewed to basic and acidic residues.

Belongs to the PARI family. In terms of assembly, interacts with RAD51 and PCNA. Interacts with PARP1. Interacts with TASOR. As to expression, restricted to testis. Overexpressed in multiple cancer cells.

The protein resides in the cytoplasm. It is found in the nucleus. Its function is as follows. Required to suppress inappropriate homologous recombination, thereby playing a central role DNA repair and in the maintenance of genomic stability. Antagonizes homologous recombination by interfering with the formation of the RAD51-DNA homologous recombination structure. Binds single-strand DNA and poly(A) homopolymers. Positively regulate the poly(ADP-ribosyl)ation activity of PARP1; however such function may be indirect. The chain is PCNA-interacting partner (PARPBP) from Homo sapiens (Human).